The primary structure comprises 376 residues: General transcription factor IIH subunit 2 (376 aa).

The VWFA domain occupies 64-206 (HVMIVIDCSR…NIRCSAIGLS (143 aa)). Residues 286 to 303 (CTQCGARHCSIPAECPVC) form a C4-type zinc finger.

The protein belongs to the GTF2H2 family. Component of the 7-subunit TFIIH core complex composed of xpb-1, xpd-1, gtf-2H1, gtf-2H2C, gtf-2H3, Y73F8A.24 and gtf-2H5, which is active in NER. The core complex associates with the 3-subunit CDK-activating kinase (CAK) module composed of cyh-1, cdk-7 and mnat-1 to form the 10-subunit holoenzyme (holo-TFIIH) active in transcription.

Its subcellular location is the nucleus. In terms of biological role, component of the general transcription and DNA repair factor IIH (TFIIH) core complex, which is involved in general and transcription-coupled nucleotide excision repair (NER) of damaged DNA and, when complexed to CAK, in RNA transcription by RNA polymerase II. In NER, TFIIH acts by opening DNA around the lesion to allow the excision of the damaged oligonucleotide and its replacement by a new DNA fragment. In transcription, TFIIH has an essential role in transcription initiation. When the pre-initiation complex (PIC) has been established, TFIIH is required for promoter opening and promoter escape. Phosphorylation of the C-terminal tail (CTD) of the largest subunit of RNA polymerase II by the kinase module CAK controls the initiation of transcription. In Caenorhabditis elegans, this protein is General transcription factor IIH subunit 2.